We begin with the raw amino-acid sequence, 320 residues long: MIDFRPFYQQIATSPLSAWLETLPLQLKQWEKQTHGDYAKWAKMLDHLPSLPCEVNLADKVEARLVEPLSAGETQRLVHHLKQLMPWRKGPYHLYGVHIDCEWRSDFKWDRVLPHLSPLKDRLILDVGCGSGYHMWRMVGEGAKMVVGIDPTELFLCQFEAVRKLLNNDRRANLIPLGIEQMQPLQAFDTVFSMGVLYHRKSPLDHLAQLKNQLVKGGELVLETLVIDGDINDVLVPADRYAKMKNVYFIPSVPALINWLEKVGFKNVRCVDEAVTTSEEQRKTDWLENETLVDFLDPQDHSKTIEGYPAPKRAVIIATN.

Residues Lys-89, Trp-103, Lys-108, Gly-128, 150–152, 179–180, Met-194, Tyr-198, and Arg-313 contribute to the carboxy-S-adenosyl-L-methionine site; these read DPT and IE.

This sequence belongs to the class I-like SAM-binding methyltransferase superfamily. CmoB family. Homotetramer.

The catalysed reaction is carboxy-S-adenosyl-L-methionine + 5-hydroxyuridine(34) in tRNA = 5-carboxymethoxyuridine(34) in tRNA + S-adenosyl-L-homocysteine + H(+). Its function is as follows. Catalyzes carboxymethyl transfer from carboxy-S-adenosyl-L-methionine (Cx-SAM) to 5-hydroxyuridine (ho5U) to form 5-carboxymethoxyuridine (cmo5U) at position 34 in tRNAs. This chain is tRNA U34 carboxymethyltransferase, found in Glaesserella parasuis serovar 5 (strain SH0165) (Haemophilus parasuis).